The following is a 206-amino-acid chain: Small ribosomal subunit protein uS4c (206 aa).

An S4 RNA-binding domain is found at 94-152; the sequence is MRLDNIVFRLGMAPTIPAARQLVNHRHILVNDFTVNIPSYSCKLGDKISVQKRFESKTN.

This sequence belongs to the universal ribosomal protein uS4 family. In terms of assembly, part of the 30S ribosomal subunit. Contacts protein S5. The interaction surface between S4 and S5 is involved in control of translational fidelity.

It localises to the plastid. Its subcellular location is the chloroplast. In terms of biological role, one of the primary rRNA binding proteins, it binds directly to 16S rRNA where it nucleates assembly of the body of the 30S subunit. With S5 and S12 plays an important role in translational accuracy. In Chara vulgaris (Common stonewort), this protein is Small ribosomal subunit protein uS4c (rps4).